The following is a 495-amino-acid chain: NADP/NAD-dependent aldehyde dehydrogenase PuuC (495 aa).

244-249 (GSTRTG) is a binding site for NAD(+). Residues Glu267 and Cys302 contribute to the active site.

It belongs to the aldehyde dehydrogenase family.

It carries out the reaction an aldehyde + NADP(+) + H2O = a carboxylate + NADPH + 2 H(+). The enzyme catalyses an aldehyde + NAD(+) + H2O = a carboxylate + NADH + 2 H(+). It catalyses the reaction 4-(gamma-L-glutamylamino)butanal + NADP(+) + H2O = 4-(gamma-L-glutamylamino)butanoate + NADPH + 2 H(+). The catalysed reaction is 4-(gamma-L-glutamylamino)butanal + NAD(+) + H2O = 4-(gamma-L-glutamylamino)butanoate + NADH + 2 H(+). It participates in amine and polyamine degradation; putrescine degradation; 4-aminobutanoate from putrescine: step 3/4. Its activity is regulated as follows. Lithium ions exhibits the highest inhibition (97%). To a lesser extent (5-20%), potassium, sodium, and ammonium ions also inhibit PuuC activity. Transition metals, such as copper and zinc ions inhibit PuuC activity by more than 90%. The presence of heavy metals (mercury, silver) or sodium hydrogensulfite in the reaction mixture completely inactivate PuuC; in contrast, disulfide reductants such as DTT and 2-mercaptoethanol significantly increase its activity by 75% and 27%, respectively. Functionally, catalyzes the oxidation of 3-hydroxypropionaldehyde (3-HPA) to 3-hydroxypropionic acid (3-HP). It acts preferentially with NAD but can also use NADP. 3-HPA appears to be the most suitable substrate for PuuC followed by isovaleraldehyde, propionaldehyde, butyraldehyde, and valeraldehyde. It might play a role in propionate and/or acetic acid metabolisms. Also involved in the breakdown of putrescine through the oxidation of gamma-Glu-gamma-aminobutyraldehyde to gamma-Glu-gamma-aminobutyrate (gamma-Glu-GABA). The polypeptide is NADP/NAD-dependent aldehyde dehydrogenase PuuC (Escherichia coli (strain K12)).